The sequence spans 512 residues: ATP synthase subunit alpha (512 aa).

169 to 176 contributes to the ATP binding site; the sequence is GDRQTGKT.

The protein belongs to the ATPase alpha/beta chains family. As to quaternary structure, F-type ATPases have 2 components, CF(1) - the catalytic core - and CF(0) - the membrane proton channel. CF(1) has five subunits: alpha(3), beta(3), gamma(1), delta(1), epsilon(1). CF(0) has three main subunits: a(1), b(2) and c(9-12). The alpha and beta chains form an alternating ring which encloses part of the gamma chain. CF(1) is attached to CF(0) by a central stalk formed by the gamma and epsilon chains, while a peripheral stalk is formed by the delta and b chains.

It localises to the cell membrane. It catalyses the reaction ATP + H2O + 4 H(+)(in) = ADP + phosphate + 5 H(+)(out). Produces ATP from ADP in the presence of a proton gradient across the membrane. The alpha chain is a regulatory subunit. The chain is ATP synthase subunit alpha from Elusimicrobium minutum (strain Pei191).